We begin with the raw amino-acid sequence, 330 residues long: Glycerol-3-phosphate dehydrogenase [NAD(P)+] (330 aa).

NADPH-binding residues include W11, R31, H32, and K105. The sn-glycerol 3-phosphate site is built by K105 and G133. Residue A137 coordinates NADPH. Residues K188, D241, S251, R252, and N253 each contribute to the sn-glycerol 3-phosphate site. The active-site Proton acceptor is the K188. Position 252 (R252) interacts with NADPH. Residues L277 and E279 each coordinate NADPH.

This sequence belongs to the NAD-dependent glycerol-3-phosphate dehydrogenase family.

Its subcellular location is the cytoplasm. The enzyme catalyses sn-glycerol 3-phosphate + NAD(+) = dihydroxyacetone phosphate + NADH + H(+). It carries out the reaction sn-glycerol 3-phosphate + NADP(+) = dihydroxyacetone phosphate + NADPH + H(+). Its pathway is membrane lipid metabolism; glycerophospholipid metabolism. Functionally, catalyzes the reduction of the glycolytic intermediate dihydroxyacetone phosphate (DHAP) to sn-glycerol 3-phosphate (G3P), the key precursor for phospholipid synthesis. This Orientia tsutsugamushi (strain Boryong) (Rickettsia tsutsugamushi) protein is Glycerol-3-phosphate dehydrogenase [NAD(P)+].